The following is a 330-amino-acid chain: G-protein coupled receptor 74 (330 aa).

Transmembrane regions (helical) follow at residues leucine 50–leucine 70, phenylalanine 85–isoleucine 105, methionine 121–aspartate 141, tryptophan 160–leucine 180, valine 210–tyrosine 230, methionine 252–isoleucine 272, and leucine 295–leucine 315. A disulfide bridge links cysteine 117 with cysteine 195.

This sequence belongs to the G-protein coupled receptor 1 family.

The protein localises to the host membrane. The polypeptide is G-protein coupled receptor 74 (74) (Equus caballus (Horse)).